The primary structure comprises 488 residues: UDP-N-acetylmuramoyl-L-alanyl-D-glutamate--2,6-diaminopimelate ligase (488 aa).

S31 lines the UDP-N-acetyl-alpha-D-muramoyl-L-alanyl-D-glutamate pocket. 109–115 (GTNGKTS) is an ATP binding site. UDP-N-acetyl-alpha-D-muramoyl-L-alanyl-D-glutamate contacts are provided by residues N150, 151 to 152 (TT), S178, and R186. K218 carries the N6-carboxylysine modification. Residues R384, 408 to 411 (DNPR), G458, and E462 contribute to the meso-2,6-diaminopimelate site. Residues 408-411 (DNPR) carry the Meso-diaminopimelate recognition motif motif.

This sequence belongs to the MurCDEF family. MurE subfamily. Mg(2+) serves as cofactor. Carboxylation is probably crucial for Mg(2+) binding and, consequently, for the gamma-phosphate positioning of ATP.

The protein localises to the cytoplasm. It carries out the reaction UDP-N-acetyl-alpha-D-muramoyl-L-alanyl-D-glutamate + meso-2,6-diaminopimelate + ATP = UDP-N-acetyl-alpha-D-muramoyl-L-alanyl-gamma-D-glutamyl-meso-2,6-diaminopimelate + ADP + phosphate + H(+). The protein operates within cell wall biogenesis; peptidoglycan biosynthesis. Functionally, catalyzes the addition of meso-diaminopimelic acid to the nucleotide precursor UDP-N-acetylmuramoyl-L-alanyl-D-glutamate (UMAG) in the biosynthesis of bacterial cell-wall peptidoglycan. The polypeptide is UDP-N-acetylmuramoyl-L-alanyl-D-glutamate--2,6-diaminopimelate ligase (Bacillus licheniformis (strain ATCC 14580 / DSM 13 / JCM 2505 / CCUG 7422 / NBRC 12200 / NCIMB 9375 / NCTC 10341 / NRRL NRS-1264 / Gibson 46)).